Reading from the N-terminus, the 412-residue chain is Glutamyl-tRNA reductase (412 aa).

Substrate is bound by residues threonine 52–arginine 55, serine 108, glutamate 113–glutamate 115, and glutamine 119. The active-site Nucleophile is cysteine 53. Glycine 189–glycine 194 serves as a coordination point for NADP(+).

This sequence belongs to the glutamyl-tRNA reductase family. Homodimer.

It carries out the reaction (S)-4-amino-5-oxopentanoate + tRNA(Glu) + NADP(+) = L-glutamyl-tRNA(Glu) + NADPH + H(+). Its pathway is porphyrin-containing compound metabolism; protoporphyrin-IX biosynthesis; 5-aminolevulinate from L-glutamyl-tRNA(Glu): step 1/2. Its function is as follows. Catalyzes the NADPH-dependent reduction of glutamyl-tRNA(Glu) to glutamate 1-semialdehyde (GSA). This Sulfurisphaera tokodaii (strain DSM 16993 / JCM 10545 / NBRC 100140 / 7) (Sulfolobus tokodaii) protein is Glutamyl-tRNA reductase.